Reading from the N-terminus, the 720-residue chain is Dedicator of cytokinesis protein 9 (720 aa).

In terms of domain architecture, DOCKER spans 186-638 (KSYASTPELR…LSDIIVPRIC (453 aa)). An interaction with CDC42 region spans residues 277 to 638 (DEEASMMEDV…LSDIIVPRIC (362 aa)).

This sequence belongs to the DOCK family. Homodimer. Interacts preferentially with nucleotide-depleted CDC42.

Its subcellular location is the endomembrane system. In terms of biological role, guanine nucleotide-exchange factor (GEF) that activates CDC42 by exchanging bound GDP for free GTP. Overexpression induces filopodia formation. The protein is Dedicator of cytokinesis protein 9 (Dock9) of Rattus norvegicus (Rat).